The following is a 218-amino-acid chain: Ras-related protein RABE1e (218 aa).

Residue 22 to 29 participates in GTP binding; sequence GDSGVGKS. The Effector region motif lies at 44–52; sequence FITTIGIDF. GTP contacts are provided by residues 70–74, 128–131, and 159–160; these read DTAGQ, NKAD, and SA. The segment at 182–218 is disordered; that stretch reads TESDTKAEPQGIKITKQDANKASSSSTNEKSACCSYV. The span at 201–211 shows a compositional bias: polar residues; sequence NKASSSSTNEK. S-geranylgeranyl cysteine attachment occurs at residues Cys-214 and Cys-215.

It belongs to the small GTPase superfamily. Rab family. Interacts with PI5K2.

Its subcellular location is the golgi apparatus membrane. It is found in the cell membrane. Its function is as follows. Involved in membrane trafficking from the Golgi to the plasma membrane. The chain is Ras-related protein RABE1e (RABE1E) from Arabidopsis thaliana (Mouse-ear cress).